The chain runs to 123 residues: Large ribosomal subunit protein uL14 (123 aa).

This sequence belongs to the universal ribosomal protein uL14 family. As to quaternary structure, part of the 50S ribosomal subunit. Forms a cluster with proteins L3 and L19. In the 70S ribosome, L14 and L19 interact and together make contacts with the 16S rRNA in bridges B5 and B8.

In terms of biological role, binds to 23S rRNA. Forms part of two intersubunit bridges in the 70S ribosome. The sequence is that of Large ribosomal subunit protein uL14 from Erwinia tasmaniensis (strain DSM 17950 / CFBP 7177 / CIP 109463 / NCPPB 4357 / Et1/99).